We begin with the raw amino-acid sequence, 1610 residues long: E3 ubiquitin-protein ligase listerin (1610 aa).

Residues 1-10 (MKKKSTDLYG) are compositionally biased toward basic and acidic residues. Positions 1–20 (MKKKSTDLYGRKNPGMQSMS) are disordered. HEAT repeat units lie at residues 110 to 148 (LKIF…SDRA), 314 to 351 (VPML…NLIT), 372 to 408 (IGAM…EVYD), 409 to 443 (CLLN…RYFK), 590 to 626 (SPAF…SFDE), 627 to 664 (LENI…TAVF), 736 to 773 (KSLY…KALE), 965 to 1003 (GKMP…VVSN), 1119 to 1156 (CCFL…MSVV), 1322 to 1354 (RVYL…HAMD), 1355 to 1393 (LLRP…YSSA), and 1435 to 1473 (FTGY…KVNR). The segment at 1558-1604 (CAICYSVLSVERTLPNKRCGTCRHKFHASCLYKWFKSSNSSRCPLCR) adopts an RING-type; atypical zinc-finger fold.

The protein belongs to the LTN1 family. As to quaternary structure, component of the ribosome quality control complex (RQC), composed of the E3 ubiquitin ligase rkr1/ltn1, rqc1 and mtr1/rqc2, as well as cdc48 and its ubiquitin-binding cofactors. RQC forms a stable complex with 60S ribosomal subunits.

It is found in the nucleus. The protein localises to the cytoplasm. It localises to the cytosol. It carries out the reaction S-ubiquitinyl-[E2 ubiquitin-conjugating enzyme]-L-cysteine + [acceptor protein]-L-lysine = [E2 ubiquitin-conjugating enzyme]-L-cysteine + N(6)-ubiquitinyl-[acceptor protein]-L-lysine.. Its pathway is protein modification; protein ubiquitination. In terms of biological role, E3 ubiquitin-protein ligase component of the ribosome quality control complex (RQC), a ribosome-associated complex that mediates ubiquitination and extraction of incompletely synthesized nascent chains for proteasomal degradation. Mediates ubiquitination of proteins derived from mRNAs lacking stop codons (non-stop proteins) and other translation arrest products induced by poly-lysine sequences and tandem rare codons. Ubiquitination leads to cdc48 recruitment for extraction and degradation of the incomplete translation product. May indirectly play a role in chromatin function and transcription. This Schizosaccharomyces pombe (strain 972 / ATCC 24843) (Fission yeast) protein is E3 ubiquitin-protein ligase listerin.